The chain runs to 240 residues: MGKRLQSQNRGKGTPRYTSPTHKRKGAVKYRKFDESERKDKIIGTIIDILHDPGRSSPIARVRYDNGEERLILIPEGMKIKDTIECGISAEIKPGNVLPLGEVPEGIPVYNIETIPGDGGKLVRSGGCYAHVITHDVSKTIIKLPSGHMKTLNPMCRATIGVVAGGGRKEKPITKAGKKYHAMKAKAVLWPRVRGVAMNAVDHPFGGGNTQHAGKPTTISRHTSPGRKVGHIAARRTGKR.

A compositionally biased stretch (polar residues) spans Met-1–Pro-20. Disordered regions lie at residues Met-1–Phe-33 and Pro-204–Arg-240. 2 stretches are compositionally biased toward basic residues: residues Thr-21–Tyr-30 and Ser-224–Arg-240.

Belongs to the universal ribosomal protein uL2 family. As to quaternary structure, part of the 50S ribosomal subunit. Forms a bridge to the 30S subunit in the 70S ribosome.

In terms of biological role, one of the primary rRNA binding proteins. Required for association of the 30S and 50S subunits to form the 70S ribosome, for tRNA binding and peptide bond formation. It has been suggested to have peptidyltransferase activity; this is somewhat controversial. Makes several contacts with the 16S rRNA in the 70S ribosome. The protein is Large ribosomal subunit protein uL2 of Methanococcus aeolicus (strain ATCC BAA-1280 / DSM 17508 / OCM 812 / Nankai-3).